A 47-amino-acid chain; its full sequence is PhoP/PhoQ regulator MgrB (47 aa).

The chain crosses the membrane as a helical span at residues 6–26 (WVVLVVVVLACLLLWAQVFNM).

This sequence belongs to the MgrB family. May form homooligomers. Probably interacts with the periplasmic domain of PhoQ.

The protein localises to the cell inner membrane. In terms of biological role, phoP-regulated transcription is redox-sensitive, being activated when the periplasm becomes more reducing. MgrB acts between DsbA/DsbB and PhoP/PhoQ in this pathway. Represses PhoP/PhoQ signaling, possibly by binding to the periplasmic domain of PhoQ, altering its activity and that of downstream effector PhoP. The sequence is that of PhoP/PhoQ regulator MgrB from Escherichia coli O157:H7.